Here is a 795-residue protein sequence, read N- to C-terminus: Forkhead box protein P4 (795 aa).

Residues 1–25 are compositionally biased toward polar residues; it reads MMVESASETIRSAPSGQNGVGSLSA. Residues 1 to 62 are disordered; sequence MMVESASETI…SGGADSNGEM (62 aa). A compositionally biased stretch (low complexity) spans 36–45; that stretch reads AGTAPAAGRD. A phosphoserine mark is found at S58 and S92. K181 participates in a covalent cross-link: Glycyl lysine isopeptide (Lys-Gly) (interchain with G-Cter in SUMO2). Disordered stretches follow at residues 233–252 and 265–310; these read PQLWKGEGAPGQPAEDSGRQ and TSFA…PLYG. A compositionally biased stretch (basic and acidic residues) spans 292 to 303; that stretch reads SRRDSSSHEETP. The segment at 312-337 adopts a C2H2-type zinc-finger fold; that stretch reads GECKWPGCETLCEDLGQFIKHLNTEH. A leucine-zipper region spans residues 354–375; sequence VQQLEIQLAKESERLQAMMAHL. The disordered stretch occupies residues 379 to 437; the sequence is PSEPKPFSQPVTVSADPFPDGLVHPPTSAAAPVTPLRPPGLGSASLHSGGPARRRSNDK. Residue K383 forms a Glycyl lysine isopeptide (Lys-Gly) (interchain with G-Cter in SUMO2) linkage. Positions 459–549 form a DNA-binding region, fork-head; sequence RPPFTYASLI…PPKMTGSPTL (91 aa). Phosphoserine is present on S546. The segment at 589–671 is disordered; that stretch reads ASSLLPLSQE…LEEDLGGEDM (83 aa). Positions 609-627 are enriched in polar residues; sequence SNGSSSPPRLSPPQYSHQI. Residues 628-642 are compositionally biased toward basic and acidic residues; it reads QVKEEPAEAEEDRRP.

As to quaternary structure, forms homodimers and heterodimers with FOXP1 and FOXP2. Dimerization is required for DNA-binding. In terms of tissue distribution, expressed in the adult heart, brain, spleen lung, liver, kidney and testes.

It is found in the nucleus. Functionally, transcriptional repressor that represses lung-specific expression. The sequence is that of Forkhead box protein P4 from Mus musculus (Mouse).